A 320-amino-acid polypeptide reads, in one-letter code: Cytochrome f (320 aa).

An N-terminal signal peptide occupies residues 1-35; sequence MQTINTFSWINQRITRSISVLLLVYIITRTSISSA. 4 residues coordinate heme: Tyr36, Cys56, Cys59, and His60. A helical transmembrane segment spans residues 286 to 306; sequence VQGLLFFLASVILAQIFLVLK.

It belongs to the cytochrome f family. As to quaternary structure, the 4 large subunits of the cytochrome b6-f complex are cytochrome b6, subunit IV (17 kDa polypeptide, petD), cytochrome f and the Rieske protein, while the 4 small subunits are PetG, PetL, PetM and PetN. The complex functions as a dimer. Requires heme as cofactor.

It is found in the plastid thylakoid membrane. Its function is as follows. Component of the cytochrome b6-f complex, which mediates electron transfer between photosystem II (PSII) and photosystem I (PSI), cyclic electron flow around PSI, and state transitions. This Cuscuta exaltata (Tall dodder) protein is Cytochrome f.